A 255-amino-acid chain; its full sequence is Eukaryotic translation initiation factor 3 subunit J (255 aa).

Acidic residues-rich tracts occupy residues methionine 1–aspartate 16 and glutamate 34–glutamine 53. A disordered region spans residues methionine 1–glutamate 107. Residues aspartate 54–alanine 95 are compositionally biased toward basic and acidic residues. Residues glutamate 69–alanine 131 are a coiled coil.

This sequence belongs to the eIF-3 subunit J family. As to quaternary structure, component of the eukaryotic translation initiation factor 3 (eIF-3) complex, which is composed of 13 subunits: eif3a, eif3b, eif3c, eif3d, eif3e, eif3f, eif3g, eif3h, eif3i, eif3j, eif3k, eif3l and eif3m.

The protein localises to the cytoplasm. Its function is as follows. Component of the eukaryotic translation initiation factor 3 (eIF-3) complex, which is involved in protein synthesis of a specialized repertoire of mRNAs and, together with other initiation factors, stimulates binding of mRNA and methionyl-tRNAi to the 40S ribosome. The eIF-3 complex specifically targets and initiates translation of a subset of mRNAs involved in cell proliferation. The chain is Eukaryotic translation initiation factor 3 subunit J (eif3j) from Xenopus laevis (African clawed frog).